A 79-amino-acid chain; its full sequence is Polcalcin Bra r 1 (79 aa).

EF-hand domains are found at residues 1-36 (MADA…LGSV) and 39-71 (DDVT…NPGL). Residues Asp-14, Asp-16, Asp-18, Lys-20, Glu-25, Asp-49, Asp-51, Asp-53, Asn-55, and Glu-60 each contribute to the Ca(2+) site.

This chain is Polcalcin Bra r 1, found in Brassica campestris (Field mustard).